The following is a 184-amino-acid chain: Endoribonuclease YbeY (184 aa).

The Zn(2+) site is built by His151, His155, and His161.

Belongs to the endoribonuclease YbeY family. Zn(2+) serves as cofactor.

It localises to the cytoplasm. Its function is as follows. Single strand-specific metallo-endoribonuclease involved in late-stage 70S ribosome quality control and in maturation of the 3' terminus of the 16S rRNA. The polypeptide is Endoribonuclease YbeY (Prochlorococcus marinus (strain NATL2A)).